The primary structure comprises 507 residues: Maturase K (507 aa).

The protein belongs to the intron maturase 2 family. MatK subfamily.

Its subcellular location is the plastid. It localises to the chloroplast. In terms of biological role, usually encoded in the trnK tRNA gene intron. Probably assists in splicing its own and other chloroplast group II introns. This Nymphaea alba (White water-lily) protein is Maturase K.